Consider the following 78-residue polypeptide: MSTIQRICLVLTIIGAINWGLIGFFQFDLVAAIFGGQGSALSRIIYGLVGIAGLINLGLLFKPNEERSREEAANPEMR.

The next 2 membrane-spanning stretches (helical) occupy residues 7-27 (ICLV…FFQF) and 41-61 (LSRI…GLLF).

The protein localises to the cell membrane. This is an uncharacterized protein from Bacillus subtilis (strain 168).